A 314-amino-acid polypeptide reads, in one-letter code: Phosphoribosylaminoimidazole-succinocarboxamide synthase (314 aa).

This sequence belongs to the SAICAR synthetase family.

It carries out the reaction 5-amino-1-(5-phospho-D-ribosyl)imidazole-4-carboxylate + L-aspartate + ATP = (2S)-2-[5-amino-1-(5-phospho-beta-D-ribosyl)imidazole-4-carboxamido]succinate + ADP + phosphate + 2 H(+). It functions in the pathway purine metabolism; IMP biosynthesis via de novo pathway; 5-amino-1-(5-phospho-D-ribosyl)imidazole-4-carboxamide from 5-amino-1-(5-phospho-D-ribosyl)imidazole-4-carboxylate: step 1/2. This Bacteroides thetaiotaomicron (strain ATCC 29148 / DSM 2079 / JCM 5827 / CCUG 10774 / NCTC 10582 / VPI-5482 / E50) protein is Phosphoribosylaminoimidazole-succinocarboxamide synthase.